Here is a 307-residue protein sequence, read N- to C-terminus: Ornithine carbamoyltransferase (307 aa).

Carbamoyl phosphate contacts are provided by residues 53–56 (STRT), Gln-80, Arg-104, and 131–134 (HPCQ). Residues Asn-162, Asp-219, and 223-224 (SM) each bind L-ornithine. Carbamoyl phosphate contacts are provided by residues 259 to 260 (CL) and Arg-287.

The protein belongs to the aspartate/ornithine carbamoyltransferase superfamily. OTCase family.

The protein localises to the cytoplasm. The enzyme catalyses carbamoyl phosphate + L-ornithine = L-citrulline + phosphate + H(+). The protein operates within amino-acid biosynthesis; L-arginine biosynthesis; L-arginine from L-ornithine and carbamoyl phosphate: step 1/3. Functionally, reversibly catalyzes the transfer of the carbamoyl group from carbamoyl phosphate (CP) to the N(epsilon) atom of ornithine (ORN) to produce L-citrulline. The polypeptide is Ornithine carbamoyltransferase (Psychrobacter arcticus (strain DSM 17307 / VKM B-2377 / 273-4)).